Here is a 688-residue protein sequence, read N- to C-terminus: Polyribonucleotide nucleotidyltransferase (688 aa).

Mg(2+)-binding residues include aspartate 484 and aspartate 490. The region spanning 550-609 (PQTEIFNVAPDKIIEIIGQGGRVIKEIVEKFEVKIDLNTPSGEVKIMGNKERVLKTKEFI) is the KH domain. The S1 motif domain maps to 626-688 (DEVLEAQVKR…NKGKIALDLA (63 aa)).

The protein belongs to the polyribonucleotide nucleotidyltransferase family. Requires Mg(2+) as cofactor.

The protein localises to the cytoplasm. The enzyme catalyses RNA(n+1) + phosphate = RNA(n) + a ribonucleoside 5'-diphosphate. In terms of biological role, involved in mRNA degradation. Catalyzes the phosphorolysis of single-stranded polyribonucleotides processively in the 3'- to 5'-direction. The polypeptide is Polyribonucleotide nucleotidyltransferase (Helicobacter pylori (strain J99 / ATCC 700824) (Campylobacter pylori J99)).